Reading from the N-terminus, the 206-residue chain is LexA repressor (206 aa).

The H-T-H motif DNA-binding region spans 28–48 (RAEIARRLGFKSANAAEEHLK). Catalysis depends on for autocatalytic cleavage activity residues Ser-123 and Lys-160.

This sequence belongs to the peptidase S24 family. Homodimer.

It catalyses the reaction Hydrolysis of Ala-|-Gly bond in repressor LexA.. Its function is as follows. Represses a number of genes involved in the response to DNA damage (SOS response), including recA and lexA. In the presence of single-stranded DNA, RecA interacts with LexA causing an autocatalytic cleavage which disrupts the DNA-binding part of LexA, leading to derepression of the SOS regulon and eventually DNA repair. The protein is LexA repressor of Shewanella piezotolerans (strain WP3 / JCM 13877).